Consider the following 180-residue polypeptide: Large ribosomal subunit protein uL6 (180 aa).

It belongs to the universal ribosomal protein uL6 family. In terms of assembly, part of the 50S ribosomal subunit.

In terms of biological role, this protein binds to the 23S rRNA, and is important in its secondary structure. It is located near the subunit interface in the base of the L7/L12 stalk, and near the tRNA binding site of the peptidyltransferase center. This is Large ribosomal subunit protein uL6 from Desulforapulum autotrophicum (strain ATCC 43914 / DSM 3382 / VKM B-1955 / HRM2) (Desulfobacterium autotrophicum).